Reading from the N-terminus, the 583-residue chain is Scarecrow-like protein 30 (583 aa).

Disordered regions lie at residues 107–154 and 182–205; these read GDLE…RKSK and EATE…KSDQ. The span at 115–124 shows a compositional bias: polar residues; that stretch reads GNFSSITSLH. The segment covering 131–140 has biased composition (basic and acidic residues); it reads ESTRRYRHRD. One can recognise a GRAS domain in the interval 200–579; it reads QQKSDQPVDM…RVLYAVSCWK (380 aa). Residues 207 to 266 form a leucine repeat I (LRI) region; the sequence is VDMRNLLMQCAQAVASFDQRRAFEKLKEIREHSSRHGDATQRLGYHFAEALEARITGTMT. Residues 285-350 are VHIID; sequence YKGFVQACPT…IGPPLLRVTG (66 aa). The short motif at 316-320 is the VHIID element; sequence LHIID. Residues 366 to 398 are leucine repeat II (LRII); sequence ETGRRLKRFCDKFNVPFEYSFIAKNWENITLDD. The tract at residues 407–501 is PFYRE; sequence TVVNCILRLQ…RELIIRDAMS (95 aa). The segment at 504-579 is SAW; the sequence is ACEGSERFAR…RVLYAVSCWK (76 aa).

The protein belongs to the GRAS family. As to quaternary structure, interacts with SNRNP35 and CYP95. Expressed in seedlings, leaves, sepals, stamen and pistil, and in the quiescent center of root meristem.

It is found in the nucleus. Functionally, probable transcription factor involved in plant development. This chain is Scarecrow-like protein 30 (SCL30), found in Arabidopsis thaliana (Mouse-ear cress).